A 311-amino-acid chain; its full sequence is MEPAHVPVLAQEAVAALAIKPEGVYVDATFGRGGHSRMILARLGTLGRLVALDRDPAAIAAGAALDDPRLTLRQSEFSRLGKVLDALGIARVDGILLDIGVSSPQLDDAARGFSFRFDAPLDMRMDPGSGISAADWLATAEEEEISEVIRTYGEERFAKPIARALVAARQKEAITSTAQLAGIIAAAVKKREPGQHPATRSFQAIRIYLNRELEELKAVLPQCVERLRAGGRLAVISFHSLEDRIVKRFLRTESLGEQAPPRLPIPAAMLKAGRLRLVGRAQHASDAEVAANPRARSAVLRVAERVAEAGA.

S-adenosyl-L-methionine contacts are provided by residues 33–35 (GGH), Asp53, Phe77, Asp98, and Gln105.

Belongs to the methyltransferase superfamily. RsmH family.

The protein localises to the cytoplasm. The catalysed reaction is cytidine(1402) in 16S rRNA + S-adenosyl-L-methionine = N(4)-methylcytidine(1402) in 16S rRNA + S-adenosyl-L-homocysteine + H(+). Its function is as follows. Specifically methylates the N4 position of cytidine in position 1402 (C1402) of 16S rRNA. In Thiobacillus denitrificans (strain ATCC 25259 / T1), this protein is Ribosomal RNA small subunit methyltransferase H.